The sequence spans 89 residues: CRISPR-associated endoribonuclease Cas2 2 (89 aa).

D9 is a Mg(2+) binding site.

It belongs to the CRISPR-associated endoribonuclease Cas2 protein family. In terms of assembly, homodimer, forms a heterotetramer with a Cas1 homodimer. Mg(2+) is required as a cofactor.

In terms of biological role, CRISPR (clustered regularly interspaced short palindromic repeat), is an adaptive immune system that provides protection against mobile genetic elements (viruses, transposable elements and conjugative plasmids). CRISPR clusters contain sequences complementary to antecedent mobile elements and target invading nucleic acids. CRISPR clusters are transcribed and processed into CRISPR RNA (crRNA). Functions as a ssRNA-specific endoribonuclease. Involved in the integration of spacer DNA into the CRISPR cassette. The chain is CRISPR-associated endoribonuclease Cas2 2 from Methanospirillum hungatei JF-1 (strain ATCC 27890 / DSM 864 / NBRC 100397 / JF-1).